A 330-amino-acid chain; its full sequence is Phenylalanine--tRNA ligase alpha subunit (330 aa).

E254 is a Mg(2+) binding site.

It belongs to the class-II aminoacyl-tRNA synthetase family. Phe-tRNA synthetase alpha subunit type 1 subfamily. Tetramer of two alpha and two beta subunits. Mg(2+) is required as a cofactor.

The protein localises to the cytoplasm. It catalyses the reaction tRNA(Phe) + L-phenylalanine + ATP = L-phenylalanyl-tRNA(Phe) + AMP + diphosphate + H(+). The polypeptide is Phenylalanine--tRNA ligase alpha subunit (pheS) (Neisseria meningitidis serogroup A / serotype 4A (strain DSM 15465 / Z2491)).